A 520-amino-acid polypeptide reads, in one-letter code: Anthranilate synthase component 1 (520 aa).

Residues serine 40 and 291–293 (PYM) each bind L-tryptophan. 328-329 (GT) serves as a coordination point for chorismate. Glutamate 361 is a binding site for Mg(2+). Residues tyrosine 449, arginine 469, 483 to 485 (GAG), and glycine 485 contribute to the chorismate site. Glutamate 498 contributes to the Mg(2+) binding site.

It belongs to the anthranilate synthase component I family. Heterotetramer consisting of two non-identical subunits: a beta subunit (TrpG) and a large alpha subunit (TrpE). It depends on Mg(2+) as a cofactor.

The catalysed reaction is chorismate + L-glutamine = anthranilate + pyruvate + L-glutamate + H(+). It functions in the pathway amino-acid biosynthesis; L-tryptophan biosynthesis; L-tryptophan from chorismate: step 1/5. Its activity is regulated as follows. Feedback inhibited by tryptophan. Functionally, part of a heterotetrameric complex that catalyzes the two-step biosynthesis of anthranilate, an intermediate in the biosynthesis of L-tryptophan. In the first step, the glutamine-binding beta subunit (TrpG) of anthranilate synthase (AS) provides the glutamine amidotransferase activity which generates ammonia as a substrate that, along with chorismate, is used in the second step, catalyzed by the large alpha subunit of AS (TrpE) to produce anthranilate. In the absence of TrpG, TrpE can synthesize anthranilate directly from chorismate and high concentrations of ammonia. In Buchnera aphidicola subsp. Pemphigus spyrothecae, this protein is Anthranilate synthase component 1 (trpE).